Here is a 691-residue protein sequence, read N- to C-terminus: Elongation factor G (691 aa).

The 275-residue stretch at 8-282 folds into the tr-type G domain; sequence EQTRNIGIMA…AVIDYLPAPT (275 aa). GTP contacts are provided by residues 17 to 24, 81 to 85, and 135 to 138; these read AHIDAGKT, DTPGH, and NKMD.

Belongs to the TRAFAC class translation factor GTPase superfamily. Classic translation factor GTPase family. EF-G/EF-2 subfamily.

Its subcellular location is the cytoplasm. Its function is as follows. Catalyzes the GTP-dependent ribosomal translocation step during translation elongation. During this step, the ribosome changes from the pre-translocational (PRE) to the post-translocational (POST) state as the newly formed A-site-bound peptidyl-tRNA and P-site-bound deacylated tRNA move to the P and E sites, respectively. Catalyzes the coordinated movement of the two tRNA molecules, the mRNA and conformational changes in the ribosome. In Natranaerobius thermophilus (strain ATCC BAA-1301 / DSM 18059 / JW/NM-WN-LF), this protein is Elongation factor G.